A 347-amino-acid chain; its full sequence is MVFDVWKSLKKGEVHPVYCLYGKETYLLQETVSRIRQTVVDQETKDFNLSVFDLEEDPLDQAIADAETFPFMGERRLVIVKNPYFLTGEKKKEKIEHNVSALESYIQSPAPYTVFVLLAPYEKLDERKKLTKALKKHAFMMEAKELNAKETTDFTVNLAKTEQKTIGTEAAEHLVLLVNGHLSSIFQEIQKLCTFIGDREEITLDDVKMLVARSLEQNIFELINKIVNRKRTESLQIFYDLLKQNEEPIKIMALISNQFRLILQTKYFAEQGYGQKQIASNLKVHPFRVKLAMDQARLFSEEELRLIIEQLAVMDYEMKTGKKDKQLLLELFLLQLLKRNEKNDPHY.

This sequence belongs to the DNA polymerase HolA subunit family. As to quaternary structure, component of the DNA clamp loading complex consisting of tau(3):delta(1):delta'(1). The DNA polymerase III holoenzyme complex contains at least 10 different subunits organized into 3 functionally essential subassemblies: the Pol III core, the beta sliding clamp processivity factor and the clamp-loading complex. The Pol III core (subunits alpha, epsilon and theta) contains the polymerase and the 3'-5' exonuclease proofreading activities. The polymerase is tethered to the template via the dimeric beta sliding clamp processivity factor. The DNA clamp-loading complex assembles the beta sliding clamp onto the primed template and plays a central role in the organization and communication at the replication fork.

It localises to the cytoplasm. It is found in the nucleoid. The enzyme catalyses DNA(n) + a 2'-deoxyribonucleoside 5'-triphosphate = DNA(n+1) + diphosphate. Its function is as follows. Part of the beta sliding clamp loading complex, which hydrolyzes ATP to load the beta clamp onto primed DNA to form the DNA replication pre-initiation complex. DNA polymerase III is a complex, multichain enzyme responsible for most of the replicative synthesis in bacteria. This DNA polymerase also exhibits 3'-5' exonuclease activity. The delta subunit is the wrench that will open the beta subunit dimer. The DNA clamp loading complex (tau(3),delta,delta') is thought to load beta dimers onto DNA by binding ATP which alters the complex's conformation so it can bind beta sliding clamp dimers and open them at one interface. Primed DNA is recognized, ATP is hydrolyzed releasing the clamp loading complex and closing the beta sliding clamp ring around the primed DNA. This is DNA polymerase III subunit delta from Bacillus subtilis (strain 168).